The following is a 304-amino-acid chain: Sulfate adenylyltransferase subunit 2 (304 aa).

The protein belongs to the PAPS reductase family. CysD subfamily. As to quaternary structure, heterodimer composed of CysD, the smaller subunit, and CysN.

The catalysed reaction is sulfate + ATP + H(+) = adenosine 5'-phosphosulfate + diphosphate. Its pathway is sulfur metabolism; hydrogen sulfide biosynthesis; sulfite from sulfate: step 1/3. Its function is as follows. With CysN forms the ATP sulfurylase (ATPS) that catalyzes the adenylation of sulfate producing adenosine 5'-phosphosulfate (APS) and diphosphate, the first enzymatic step in sulfur assimilation pathway. APS synthesis involves the formation of a high-energy phosphoric-sulfuric acid anhydride bond driven by GTP hydrolysis by CysN coupled to ATP hydrolysis by CysD. The polypeptide is Sulfate adenylyltransferase subunit 2 (Halorhodospira halophila (strain DSM 244 / SL1) (Ectothiorhodospira halophila (strain DSM 244 / SL1))).